A 463-amino-acid polypeptide reads, in one-letter code: Retinoic acid receptor RXR-gamma (463 aa).

The interval 1–138 (MYGNYSHFMK…TSPGSLVKHI (138 aa)) is modulating. Residues 16–53 (GGSPGHTGSTSMSPSVALPTGKPMDSHPSYTDTPVSAP) are disordered. 2 NR C4-type zinc fingers span residues 139 to 159 (CAIC…CEGC) and 175 to 199 (CRDN…YQKC). Positions 139 to 204 (CAICGDRSSG…RYQKCLVMGM (66 aa)) form a DNA-binding region, nuclear receptor. The interval 205-230 (KREAVQEERQRSRERAESEAECASTG) is hinge. Residues 231-459 (HEDMPVERIL…TFLMEMLETP (229 aa)) form the NR LBD domain.

This sequence belongs to the nuclear hormone receptor family. NR2 subfamily. As to quaternary structure, homodimer. Heterodimer with a RAR molecule. Binds DNA preferentially as a RAR/RXR heterodimer. Interacts with RARA. In terms of processing, acetylated by EP300. Expressed in the liver, but not detected in the adrenal gland (at protein level). Restricted expression in adrenal gland, kidney, liver, brain and lungs. Strong expression in heart and muscles.

The protein resides in the nucleus. Its subcellular location is the cytoplasm. Receptor for retinoic acid. Retinoic acid receptors bind as heterodimers to their target response elements in response to their ligands, all-trans or 9-cis retinoic acid, and regulate gene expression in various biological processes. The RAR/RXR heterodimers bind to the retinoic acid response elements (RARE) composed of tandem 5'-AGGTCA-3' sites known as DR1-DR5. The high affinity ligand for RXRs is 9-cis retinoic acid. This Rattus norvegicus (Rat) protein is Retinoic acid receptor RXR-gamma (Rxrg).